Reading from the N-terminus, the 172-residue chain is Ribosome maturation factor RimM (172 aa).

The PRC barrel domain occupies 97–170 (DDEYYYDEII…LITIDVLEGL (74 aa)).

Belongs to the RimM family. Binds ribosomal protein uS19.

The protein localises to the cytoplasm. Functionally, an accessory protein needed during the final step in the assembly of 30S ribosomal subunit, possibly for assembly of the head region. Essential for efficient processing of 16S rRNA. May be needed both before and after RbfA during the maturation of 16S rRNA. It has affinity for free ribosomal 30S subunits but not for 70S ribosomes. The chain is Ribosome maturation factor RimM from Leuconostoc citreum (strain KM20).